The sequence spans 1401 residues: DNA-directed RNA polymerase subunit beta' (1401 aa).

Residues cysteine 70, cysteine 72, cysteine 85, and cysteine 88 each coordinate Zn(2+). Mg(2+)-binding residues include aspartate 460, aspartate 462, and aspartate 464. The Zn(2+) site is built by cysteine 808, cysteine 882, cysteine 889, and cysteine 892.

The protein belongs to the RNA polymerase beta' chain family. As to quaternary structure, the RNAP catalytic core consists of 2 alpha, 1 beta, 1 beta' and 1 omega subunit. When a sigma factor is associated with the core the holoenzyme is formed, which can initiate transcription. Requires Mg(2+) as cofactor. Zn(2+) is required as a cofactor.

It catalyses the reaction RNA(n) + a ribonucleoside 5'-triphosphate = RNA(n+1) + diphosphate. DNA-dependent RNA polymerase catalyzes the transcription of DNA into RNA using the four ribonucleoside triphosphates as substrates. The polypeptide is DNA-directed RNA polymerase subunit beta' (Legionella pneumophila subsp. pneumophila (strain Philadelphia 1 / ATCC 33152 / DSM 7513)).